The following is a 429-amino-acid chain: Glutamate-1-semialdehyde 2,1-aminomutase 2 (429 aa).

N6-(pyridoxal phosphate)lysine is present on K268.

Belongs to the class-III pyridoxal-phosphate-dependent aminotransferase family. HemL subfamily. In terms of assembly, homodimer. Pyridoxal 5'-phosphate serves as cofactor.

It is found in the cytoplasm. It catalyses the reaction (S)-4-amino-5-oxopentanoate = 5-aminolevulinate. The protein operates within porphyrin-containing compound metabolism; protoporphyrin-IX biosynthesis; 5-aminolevulinate from L-glutamyl-tRNA(Glu): step 2/2. The sequence is that of Glutamate-1-semialdehyde 2,1-aminomutase 2 from Staphylococcus aureus (strain MSSA476).